Reading from the N-terminus, the 90-residue chain is Small ribosomal subunit protein bS16 (90 aa).

It belongs to the bacterial ribosomal protein bS16 family.

This Listeria monocytogenes serotype 4b (strain F2365) protein is Small ribosomal subunit protein bS16.